Consider the following 501-residue polypeptide: Acetylcholine receptor subunit beta (501 aa).

The N-terminal stretch at 1 to 23 is a signal peptide; that stretch reads MTPGALLMLLGALGAPLAPGVRG. At 24–244 the chain is on the extracellular side; sequence SEAEGRLREK…VIFYLIIRRK (221 aa). Cys151 and Cys165 are joined by a disulfide. Asn164 is a glycosylation site (N-linked (GlcNAc...) asparagine). The next 3 helical transmembrane spans lie at 245–269, 277–295, and 311–332; these read PLFY…VFYL, MGLS…LLLA, and YLMF…VLNL. The Cytoplasmic segment spans residues 333-469; it reads HHRSPHTHQM…WQFVAMVVDR (137 aa). Tyr390 is subject to Phosphotyrosine; by Tyr-kinases. A helical transmembrane segment spans residues 470-488; sequence LFLWTFIIFTSVGTLVIFL.

This sequence belongs to the ligand-gated ion channel (TC 1.A.9) family. Acetylcholine receptor (TC 1.A.9.1) subfamily. Beta-1/CHRNB1 sub-subfamily. As to quaternary structure, pentamer of two alpha chains, and one each of the beta, delta, and gamma (in immature muscle) or epsilon (in mature muscle) chains. The muscle heteropentamer composed of alpha-1, beta-1, delta, epsilon subunits interacts with the alpha-conotoxin ImII.

Its subcellular location is the postsynaptic cell membrane. The protein resides in the cell membrane. The enzyme catalyses K(+)(in) = K(+)(out). It carries out the reaction Na(+)(in) = Na(+)(out). Functionally, after binding acetylcholine, the AChR responds by an extensive change in conformation that affects all subunits and leads to opening of an ion-conducting channel across the plasma membrane. This is Acetylcholine receptor subunit beta from Homo sapiens (Human).